Consider the following 447-residue polypeptide: Phosphoglucosamine mutase (447 aa).

Ser100 (phosphoserine intermediate) is an active-site residue. Residues Ser100, Asp239, Asp241, and Asp243 each coordinate Mg(2+). Ser100 is modified (phosphoserine).

The protein belongs to the phosphohexose mutase family. It depends on Mg(2+) as a cofactor. In terms of processing, activated by phosphorylation.

The catalysed reaction is alpha-D-glucosamine 1-phosphate = D-glucosamine 6-phosphate. Catalyzes the conversion of glucosamine-6-phosphate to glucosamine-1-phosphate. This chain is Phosphoglucosamine mutase, found in Caldanaerobacter subterraneus subsp. tengcongensis (strain DSM 15242 / JCM 11007 / NBRC 100824 / MB4) (Thermoanaerobacter tengcongensis).